A 288-amino-acid polypeptide reads, in one-letter code: ATP phosphoribosyltransferase (288 aa).

It belongs to the ATP phosphoribosyltransferase family. Long subfamily. Mg(2+) serves as cofactor.

The protein localises to the cytoplasm. It carries out the reaction 1-(5-phospho-beta-D-ribosyl)-ATP + diphosphate = 5-phospho-alpha-D-ribose 1-diphosphate + ATP. The protein operates within amino-acid biosynthesis; L-histidine biosynthesis; L-histidine from 5-phospho-alpha-D-ribose 1-diphosphate: step 1/9. With respect to regulation, feedback inhibited by histidine. Functionally, catalyzes the condensation of ATP and 5-phosphoribose 1-diphosphate to form N'-(5'-phosphoribosyl)-ATP (PR-ATP). Has a crucial role in the pathway because the rate of histidine biosynthesis seems to be controlled primarily by regulation of HisG enzymatic activity. In Methanococcus maripaludis (strain C5 / ATCC BAA-1333), this protein is ATP phosphoribosyltransferase.